We begin with the raw amino-acid sequence, 90 residues long: Secretoglobin family 1D member 1 (90 aa).

The N-terminal stretch at 1 to 21 is a signal peptide; it reads MRLSVCLLLLTLALCCYRANA.

Heterodimer of a lipophilin A and a lipophilin C (mammaglobin B) monomer associated head to head. Expressed in lachrymal gland, thymus, kidney, testis, ovary and salivary gland.

The protein localises to the secreted. May bind androgens and other steroids, may also bind estramustine, a chemotherapeutic agent used for prostate cancer. May be under transcriptional regulation of steroid hormones. The polypeptide is Secretoglobin family 1D member 1 (SCGB1D1) (Homo sapiens (Human)).